The sequence spans 540 residues: Ribonuclease Y (540 aa).

The chain crosses the membrane as a helical span at residues 4 to 24 (TILVPVAVAIVSVLVGGCAGY). Residues 230-293 (TVSVVNLPSD…EIAKRALERL (64 aa)) enclose the KH domain. Residues 356–449 (VLSHSIEVGK…VVAADTISSA (94 aa)) enclose the HD domain.

This sequence belongs to the RNase Y family.

Its subcellular location is the cell membrane. Its function is as follows. Endoribonuclease that initiates mRNA decay. This is Ribonuclease Y from Lactobacillus johnsonii (strain CNCM I-12250 / La1 / NCC 533).